We begin with the raw amino-acid sequence, 181 residues long: Protein Syd (181 aa).

The protein belongs to the Syd family.

It localises to the cell inner membrane. Interacts with the SecY protein in vivo. May bind preferentially to an uncomplexed state of SecY, thus functioning either as a chelating agent for excess SecY in the cell or as a regulatory factor that negatively controls the translocase function. This Alteromonas mediterranea (strain DSM 17117 / CIP 110805 / LMG 28347 / Deep ecotype) protein is Protein Syd.